The primary structure comprises 249 residues: MAVPENLTREQCLYLAKLAEQAERYEEMVKFMDRLVAVSASSELTVEERNLLSVAYKNVIGSLRAAWRIVSSIEQKEEGRKNEEHVVLVKDYRSKVESELSDVCAGILKILDQYLIPSAAAGESKVFYLKMKGDYYRYLAEFKVGNERKEAAEDTMLAYKAAQDIALAELAPTHPIRLGLALNYSVFYYEILNASEKACSMAKQAFEEAIAELDTLGEESYKDSTLIMQLLRDNLTLWTSDMQEQMDEA.

It belongs to the 14-3-3 family.

The chain is 14-3-3-like protein D from Nicotiana tabacum (Common tobacco).